We begin with the raw amino-acid sequence, 354 residues long: Methionine import ATP-binding protein MetN (354 aa).

Residues 8–250 enclose the ABC transporter domain; that stretch reads LDHIDITFRQ…PKEALTQEFI (243 aa). 42–49 contacts ATP; that stretch reads GYSGAGKS.

It belongs to the ABC transporter superfamily. Methionine importer (TC 3.A.1.24) family. In terms of assembly, the complex is composed of two ATP-binding proteins (MetN), two transmembrane proteins (MetI) and a solute-binding protein (MetQ).

It is found in the cell membrane. It carries out the reaction L-methionine(out) + ATP + H2O = L-methionine(in) + ADP + phosphate + H(+). The catalysed reaction is D-methionine(out) + ATP + H2O = D-methionine(in) + ADP + phosphate + H(+). Functionally, part of the ABC transporter complex MetNIQ involved in methionine import. Responsible for energy coupling to the transport system. This Streptococcus pyogenes serotype M12 (strain MGAS2096) protein is Methionine import ATP-binding protein MetN.